The following is a 657-amino-acid chain: Filensin (657 aa).

Residues methionine 1 to glycine 38 are head. The region spanning glycine 38 to leucine 318 is the IF rod domain. Residues leucine 39 to phenylalanine 73 form a coil 1A region. Residues glutamine 74–leucine 82 are linker 1. Residues aspartate 83–glutamine 182 form a coil 1B region. Positions threonine 183–serine 199 are linker 12. Positions proline 200–leucine 318 are coil 2. Positions asparagine 319–serine 657 are tail. Disordered stretches follow at residues isoleucine 503–arginine 530 and proline 565–aspartate 593. Residues proline 519 to arginine 530 are compositionally biased toward basic and acidic residues.

Belongs to the intermediate filament family. Detected in eye lens fiber cells (at protein level). Detected in embryonic eye lens.

It is found in the cell membrane. The protein localises to the cytoplasm. It localises to the cytoskeleton. The protein resides in the cell cortex. Functionally, required for the correct formation of lens intermediate filaments. This Gallus gallus (Chicken) protein is Filensin (BFSP1).